A 1712-amino-acid polypeptide reads, in one-letter code: Neurexin-2 (1712 aa).

Residues 1–28 (MASGSRWRPTPPPLLLLLLLALAARADG) form the signal peptide. The 178-residue stretch at 29–206 (LEFGGGPGQW…LRGATADPLC (178 aa)) folds into the Laminin G-like 1 domain. Residues 29-1636 (LEFGGGPGQW…EVIRESSSTT (1608 aa)) are Extracellular-facing. An N-linked (GlcNAc...) asparagine glycan is attached at Asn60. The EGF-like 1 domain occupies 202-242 (ADPLCAPARNPCANGGLCTVLAPGEVGCDCSHTGFGGKFCS). Disulfide bonds link Cys206/Cys219, Cys213/Cys229, and Cys231/Cys241. Laminin G-like domains lie at 289–486 (VATF…SFRC) and 493–686 (DPVT…APFC). Position 335 (Asp335) interacts with Ca(2+). N-linked (GlcNAc...) asparagine glycosylation occurs at Asn338. Ca(2+)-binding residues include Leu352 and Met420. 5 disulfides stabilise this stretch: Cys450–Cys486, Cys657–Cys686, Cys694–Cys705, Cys699–Cys714, and Cys716–Cys726. The 38-residue stretch at 690-727 (TLKQCASAPCRNGGVCREGWNRFICDCIGTGFLGRVCE) folds into the EGF-like 2 domain. Laminin G-like domains are found at residues 732 to 904 (VLSY…ITYC) and 918 to 1093 (DPVT…ERGC). The Ca(2+) site is built by Asp779 and Leu796. An N-linked (GlcNAc...) asparagine glycan is attached at Asn841. Ca(2+) is bound at residue Arg854. Cystine bridges form between Cys1065/Cys1093, Cys1100/Cys1111, Cys1105/Cys1120, and Cys1122/Cys1132. Positions 1096–1133 (PSTTCTEESCANQGVCLQQWDGFTCDCTMTSYGGPVCN) constitute an EGF-like 3 domain. Residues 1137–1345 (TTYIFGKGGA…HLRLVGEGPS (209 aa)) form the Laminin G-like 6 domain. Ca(2+) contacts are provided by Asp1189 and Val1206. Asn1236 carries N-linked (GlcNAc...) asparagine glycosylation. Ca(2+)-binding residues include Ile1288 and Asn1290. The tract at residues 1373–1392 (ATTTTRRGRSPTLRDSTTQN) is disordered. O-linked (Xyl...) (heparan sulfate) serine glycosylation is present at Ser1400. Disordered stretches follow at residues 1458–1489 (ATQD…CEEP) and 1525–1626 (TLLS…PGAV). Residues 1637–1657 (GMVVGIVAAAALCILILLYAM) traverse the membrane as a helical segment. The Cytoplasmic portion of the chain corresponds to 1658–1712 (YKYRNRDEGSYQVDQSRNYISNSAQSNGAVVKEKAPAAPKTPSKAKKNKDKEYYV). The disordered stretch occupies residues 1679-1712 (NSAQSNGAVVKEKAPAAPKTPSKAKKNKDKEYYV).

The protein belongs to the neurexin family. As to quaternary structure, the laminin G-like domain 1 binds to NXPH1. Interacts with PATJ. Interacts with CBLN1, CBLN2 and, less avidly, with CBLN4. Specific isoforms bind neuroligins NLGN1, NLGN2 and NLGN3. Specific isoforms bind to alpha-dystroglycan. Interacts (via Laminin G-like 1 domain) with IGSF21 (Ig-like 1 domain) in a trans-interaction manner. Interacts with CLSTN3. O-glycosylated; contains heparan sulfate. Heparan sulfate attachment is required for synapse development by mediating interactions with neuroligins. Predominantly expressed in brain.

It is found in the presynaptic cell membrane. In terms of biological role, neuronal cell surface protein that may be involved in cell recognition and cell adhesion. May mediate intracellular signaling. This chain is Neurexin-2 (NRXN2), found in Homo sapiens (Human).